A 327-amino-acid chain; its full sequence is Peroxidase N (327 aa).

Positions 1 to 28 are cleaved as a signal peptide; it reads MKTQTKVMGGHVLLTVFTLCMLCSAVRA. Gln-29 carries the pyrrolidone carboxylic acid modification. 4 disulfides stabilise this stretch: Cys-39–Cys-116, Cys-72–Cys-77, Cys-122–Cys-323, and Cys-200–Cys-232. His-70 acts as the Proton acceptor in catalysis. Ca(2+)-binding residues include Asp-71, Val-74, Gly-76, Asp-78, and Ser-80. Asn-155 carries an N-linked (GlcNAc...) asparagine glycan. Pro-163 serves as a coordination point for substrate. Asn-182 carries N-linked (GlcNAc...) asparagine glycosylation. His-193 lines the heme b pocket. Thr-194 is a binding site for Ca(2+). 2 N-linked (GlcNAc...) asparagine glycosylation sites follow: Asn-209 and Asn-239. Asp-245 lines the Ca(2+) pocket. An N-linked (GlcNAc...) asparagine glycan is attached at Asn-247. The Ca(2+) site is built by Ser-248 and Asp-253. A glycan (N-linked (GlcNAc...) asparagine) is linked at Asn-281.

Belongs to the peroxidase family. Classical plant (class III) peroxidase subfamily. Ca(2+) serves as cofactor. The cofactor is heme b.

The protein localises to the secreted. The enzyme catalyses 2 a phenolic donor + H2O2 = 2 a phenolic radical donor + 2 H2O. Removal of H(2)O(2), oxidation of toxic reductants, biosynthesis and degradation of lignin, suberization, auxin catabolism, response to environmental stresses such as wounding, pathogen attack and oxidative stress. These functions might be dependent on each isozyme/isoform in each plant tissue. The chain is Peroxidase N (HRPN) from Armoracia rusticana (Horseradish).